A 368-amino-acid chain; its full sequence is Large ribosomal subunit protein mL46 (368 aa).

The interval 53 to 81 is disordered; that stretch reads TATATTTTTLPPPHPPVTTSTGTHAATST. A compositionally biased stretch (low complexity) spans 69-81; sequence VTTSTGTHAATST.

Belongs to the mitochondrion-specific ribosomal protein mL46 family. Component of the mitochondrial large ribosomal subunit (mt-LSU). Mature N.crassa 74S mitochondrial ribosomes consist of a small (37S) and a large (54S) subunit. The 37S small subunit contains a 16S ribosomal RNA (16S mt-rRNA) and 32 different proteins. The 54S large subunit contains a 23S rRNA (23S mt-rRNA) and 42 different proteins.

It localises to the mitochondrion. Component of the mitochondrial ribosome (mitoribosome), a dedicated translation machinery responsible for the synthesis of mitochondrial genome-encoded proteins, including at least some of the essential transmembrane subunits of the mitochondrial respiratory chain. The mitoribosomes are attached to the mitochondrial inner membrane and translation products are cotranslationally integrated into the membrane. The chain is Large ribosomal subunit protein mL46 (mrpl17) from Neurospora crassa (strain ATCC 24698 / 74-OR23-1A / CBS 708.71 / DSM 1257 / FGSC 987).